The primary structure comprises 1021 residues: Sodium/potassium-transporting ATPase subunit alpha-1 (1021 aa).

Residues 1–5 (MGKGV) constitute a propeptide that is removed on maturation. Positions 1 to 11 (MGKGVGRDKYE) are enriched in basic and acidic residues. The interval 1 to 37 (MGKGVGRDKYEPAAVSEHGDKKKAKKERDMDELKKEV) is disordered. Over 6 to 85 (GRDKYEPAAV…NALTPPPTTP (80 aa)) the chain is Cytoplasmic. Lysine 9 carries the N6-acetyllysine modification. At tyrosine 10 the chain carries Phosphotyrosine. Residue serine 16 is modified to Phosphoserine; by PKC. An N6-acetyllysine modification is found at lysine 21. Basic and acidic residues predominate over residues 26–37 (KERDMDELKKEV). A phosphoserine mark is found at serine 38 and serine 45. The segment at 80–82 (PPP) is phosphoinositide-3 kinase binding. A helical transmembrane segment spans residues 86–106 (EWVKFCRQLFGGFSMLLWIGA). The Extracellular portion of the chain corresponds to 107–129 (ILCFLAYGIQAATEEEPQNDNLY). A helical membrane pass occupies residues 130 to 150 (LGVVLSAVVIITGCFSYYQEA). The Cytoplasmic portion of the chain corresponds to 151-286 (KSSKIMESFK…GGQTPIAAEI (136 aa)). A disordered region spans residues 214 to 233 (SSLTGESEPQTRSPDFTNEN). Serine 226 carries the post-translational modification Phosphoserine. At tyrosine 258 the chain carries Phosphotyrosine. A helical membrane pass occupies residues 287 to 306 (EHFIHIITGVAVFLGVSFFI). Over 307–318 (LSLILEYTWLEA) the chain is Extracellular. Residues 319–336 (VIFLIGIIVANVPEGLLA) traverse the membrane as a helical segment. Topologically, residues 337 to 770 (TVTVCLTLTA…EEGRLIFDNL (434 aa)) are cytoplasmic. Aspartate 374 acts as the 4-aspartylphosphate intermediate in catalysis. Residues serine 450 and serine 482 each carry the phosphoserine modification. Lysine 485 contacts ATP. A Phosphotyrosine modification is found at tyrosine 540. The mediates interaction with SCN7A stretch occupies residues 594-715 (RAAVPDAVGK…QGAIVAVTGD (122 aa)). Position 659 is an N6-succinyllysine (lysine 659). A phosphoserine mark is found at serine 666 and serine 673. Aspartate 715 and aspartate 719 together coordinate Mg(2+). The helical transmembrane segment at 771 to 790 (KKSIAYTLTSNIPEITPFLI) threads the bilayer. Over 791-800 (FIIANIPLPL) the chain is Extracellular. The chain crosses the membrane as a helical span at residues 801-821 (GTVTILCIDLGTDMVPAISLA). The Cytoplasmic segment spans residues 822–841 (YEQAESDIMKRQPRNPKTDK). A helical membrane pass occupies residues 842–864 (LVNEQLISMAYGQIGMIQALGGF). Topologically, residues 865 to 916 (FTYFVILAENGFLPIHLLGLRVNWDDRWINDVEDSYGQQWTYEQRKIVEFTC) are extracellular. Residues 917 to 936 (HTPFFVTIVVVQWADLVICK) traverse the membrane as a helical segment. The Cytoplasmic portion of the chain corresponds to 937–949 (TRRNSVFQQGMKN). Phosphoserine; by PKA is present on serine 941. The helical transmembrane segment at 950-968 (KILIFGLFEETALAAFLSY) threads the bilayer. The Extracellular portion of the chain corresponds to 969–983 (CPGMGVALRMYPLKP). Residues 984–1004 (TWWFCAFPYSLLIFVYDEVRK) form a helical membrane-spanning segment. The Cytoplasmic segment spans residues 1005–1021 (LIIRRRPGGWVEKETYY).

Belongs to the cation transport ATPase (P-type) (TC 3.A.3) family. Type IIC subfamily. In terms of assembly, the sodium/potassium-transporting ATPase is composed of a catalytic alpha subunit, an auxiliary non-catalytic beta subunit and an additional regulatory subunit. Interacts with regulatory subunit FXYD1. Interacts with regulatory subunit FXYD3. Interacts with SIK1. Interacts with SLC35G1 and STIM1. Interacts with CLN3; this interaction regulates the sodium/potassium-transporting ATPase complex localization at the plasma membrane. Interacts with SCN7A; activates ATP1A1 P-type sodium:potassium-exchanging transporter activity which indirectly signals to nearby neurons to regulate sodium homeostasis. Phosphorylation on Tyr-10 modulates pumping activity. Phosphorylation of Ser-941 by PKA modulates the response of ATP1A1 to PKC. Dephosphorylation by protein phosphatase 2A (PP2A) following increases in intracellular sodium, leading to increase catalytic activity.

Its subcellular location is the cell membrane. It is found in the basolateral cell membrane. The protein resides in the sarcolemma. It localises to the cell projection. The protein localises to the axon. Its subcellular location is the melanosome. It carries out the reaction K(+)(out) + Na(+)(in) + ATP + H2O = K(+)(in) + Na(+)(out) + ADP + phosphate + H(+). Functionally, this is the catalytic component of the active enzyme, which catalyzes the hydrolysis of ATP coupled with the exchange of sodium and potassium ions across the plasma membrane. This action creates the electrochemical gradient of sodium and potassium ions, providing the energy for active transport of various nutrients. Could also be part of an osmosensory signaling pathway that senses body-fluid sodium levels and controls salt intake behavior as well as voluntary water intake to regulate sodium homeostasis. This is Sodium/potassium-transporting ATPase subunit alpha-1 (ATP1A1) from Sus scrofa (Pig).